The primary structure comprises 271 residues: N-acetyltransferase ECO1 (271 aa).

The interval 1 to 38 (MKTYRAKRKYLSESEDDVFSSSPTQSPETSPLQPPNES) is disordered. Residues 20–31 (SSSPTQSPETSP) show a composition bias toward low complexity. Residues 80-104 (TTCKTCGMTYQVAYGPDISAHKSFH) form a CCHH-type zinc finger.

The protein belongs to the acetyltransferase family. ECO subfamily.

The protein resides in the nucleus. Functionally, probable acetyltransferase required for the establishment of sister chromatid cohesion and couple the processes of cohesion and DNA replication to ensure that only sister chromatids become paired together. In contrast to the structural cohesins, the deposition and establishment factors are required only during S phase. Acts by acetylating the cohesin complex component SMC3. The polypeptide is N-acetyltransferase ECO1 (ECO1) (Yarrowia lipolytica (strain CLIB 122 / E 150) (Yeast)).